An 88-amino-acid polypeptide reads, in one-letter code: Phosphocarrier protein HPr (88 aa).

One can recognise an HPr domain in the interval M1–I88. The active-site Pros-phosphohistidine intermediate is H15. Phosphoserine; by HPrK/P is present on S47.

It belongs to the HPr family.

It localises to the cytoplasm. With respect to regulation, phosphorylation on Ser-47 inhibits the phosphoryl transfer from enzyme I to HPr. Its function is as follows. General (non sugar-specific) component of the phosphoenolpyruvate-dependent sugar phosphotransferase system (sugar PTS). This major carbohydrate active-transport system catalyzes the phosphorylation of incoming sugar substrates concomitantly with their translocation across the cell membrane. The phosphoryl group from phosphoenolpyruvate (PEP) is transferred to the phosphoryl carrier protein HPr by enzyme I. Phospho-HPr then transfers it to the PTS EIIA domain. P-Ser-HPr interacts with the catabolite control protein A (CcpA), forming a complex that binds to DNA at the catabolite response elements cre, operator sites preceding a large number of catabolite-regulated genes. Thus, P-Ser-HPr is a corepressor in carbon catabolite repression (CCR), a mechanism that allows bacteria to coordinate and optimize the utilization of available carbon sources. P-Ser-HPr also plays a role in inducer exclusion, in which it probably interacts with several non-PTS permeases and inhibits their transport activity. The chain is Phosphocarrier protein HPr (ptsH) from Mycoplasma pneumoniae (strain ATCC 29342 / M129 / Subtype 1) (Mycoplasmoides pneumoniae).